The following is a 340-amino-acid chain: DNA-directed RNA polymerase subunit alpha (340 aa).

Residues 1–236 (MLSLSKNWNT…EQLQLFISFE (236 aa)) form an alpha N-terminal domain (alpha-NTD) region. Residues 251 to 340 (FSPYLLKRVD…LSKRYEDSYN (90 aa)) form an alpha C-terminal domain (alpha-CTD) region.

Belongs to the RNA polymerase alpha chain family. Homodimer. The RNAP catalytic core consists of 2 alpha, 1 beta, 1 beta' and 1 omega subunit. When a sigma factor is associated with the core the holoenzyme is formed, which can initiate transcription.

The enzyme catalyses RNA(n) + a ribonucleoside 5'-triphosphate = RNA(n+1) + diphosphate. In terms of biological role, DNA-dependent RNA polymerase catalyzes the transcription of DNA into RNA using the four ribonucleoside triphosphates as substrates. The polypeptide is DNA-directed RNA polymerase subunit alpha (Rickettsia conorii (strain ATCC VR-613 / Malish 7)).